A 305-amino-acid polypeptide reads, in one-letter code: Probable lipid kinase YegS-like (305 aa).

The DAGKc domain occupies 1 to 129 (MTQRRAMLIL…VDLGEVGGKL (129 aa)). Residues threonine 39, 65-71 (GDGTLRD), and threonine 92 contribute to the ATP site. Mg(2+) contacts are provided by leucine 210, aspartate 213, and leucine 215. The active-site Proton acceptor is glutamate 268.

It belongs to the diacylglycerol/lipid kinase family. YegS lipid kinase subfamily. The cofactor is Mg(2+). It depends on Ca(2+) as a cofactor.

It is found in the cytoplasm. In terms of biological role, probably phosphorylates lipids; the in vivo substrate is unknown. This Pseudomonas savastanoi pv. phaseolicola (strain 1448A / Race 6) (Pseudomonas syringae pv. phaseolicola (strain 1448A / Race 6)) protein is Probable lipid kinase YegS-like.